Reading from the N-terminus, the 195-residue chain is Small ribosomal subunit protein bS16 (195 aa).

Residues 171–181 (PEAPVAAAEPA) are compositionally biased toward low complexity. The tract at residues 171 to 195 (PEAPVAAAEPAPEVKAEEKEEGGEA) is disordered.

This sequence belongs to the bacterial ribosomal protein bS16 family.

This is Small ribosomal subunit protein bS16 from Chlorobium luteolum (strain DSM 273 / BCRC 81028 / 2530) (Pelodictyon luteolum).